The chain runs to 117 residues: Holo-[acyl-carrier-protein] synthase (117 aa).

Mg(2+) contacts are provided by Asp-8 and Glu-58.

It belongs to the P-Pant transferase superfamily. AcpS family. Mg(2+) serves as cofactor.

The protein resides in the cytoplasm. It catalyses the reaction apo-[ACP] + CoA = holo-[ACP] + adenosine 3',5'-bisphosphate + H(+). Functionally, transfers the 4'-phosphopantetheine moiety from coenzyme A to a Ser of acyl-carrier-protein. This is Holo-[acyl-carrier-protein] synthase from Enterococcus faecalis (strain ATCC 700802 / V583).